We begin with the raw amino-acid sequence, 530 residues long: Feruloyl esterase C (530 aa).

Positions 1 to 25 (MMLTSAILLLTLGVQLSHADDSSRE) are cleaved as a signal peptide. 6 disulfides stabilise this stretch: cysteine 31/cysteine 78, cysteine 66/cysteine 117, cysteine 190/cysteine 444, cysteine 259/cysteine 276, cysteine 285/cysteine 294, and cysteine 506/cysteine 528. Residue serine 191 is the Acyl-ester intermediate of the active site. Residues aspartate 260, aspartate 263, alanine 265, aspartate 267, and valine 269 each contribute to the Ca(2+) site. Catalysis depends on charge relay system residues aspartate 403 and histidine 443.

It belongs to the tannase family.

It is found in the secreted. The enzyme catalyses feruloyl-polysaccharide + H2O = ferulate + polysaccharide.. Involved in degradation of plant cell walls. Hydrolyzes the feruloyl-arabinose ester bond in arabinoxylans as well as the feruloyl-galactose and feruloyl-arabinose ester bonds in pectin. Active against methyl esters of sinapate (MSA) and caffeate (MCA). This is Feruloyl esterase C (faeC) from Talaromyces stipitatus (strain ATCC 10500 / CBS 375.48 / QM 6759 / NRRL 1006) (Penicillium stipitatum).